Consider the following 832-residue polypeptide: Protein P (832 aa).

Residues 1–177 (MPLSYQHFRR…FCGSPYSWEQ (177 aa)) form a terminal protein domain (TP) region. A spacer region spans residues 178–335 (DLQHGAESIH…YCLSLIVNLL (158 aa)). 2 disordered regions span residues 186-218 (IHQQ…QSQQ) and 239-266 (TARR…SCLY). Positions 336–679 (EDWGPCDEYG…YLNLYPVARQ (344 aa)) are polymerase/reverse transcriptase domain (RT). The 244-residue stretch at 346 to 589 (EHHIRIPRTP…YSLHFMGYVI (244 aa)) folds into the Reverse transcriptase domain. Mg(2+) is bound by residues D418, D540, and D541.

Belongs to the hepadnaviridae P protein family.

The catalysed reaction is DNA(n) + a 2'-deoxyribonucleoside 5'-triphosphate = DNA(n+1) + diphosphate. It carries out the reaction Endonucleolytic cleavage to 5'-phosphomonoester.. Activated by host HSP70 and HSP40 in vitro to be able to bind the epsilon loop of the pgRNA. Because deletion of the RNase H region renders the protein partly chaperone-independent, the chaperones may be needed indirectly to relieve occlusion of the RNA-binding site by this domain. Inhibited by several reverse-transcriptase inhibitors: Lamivudine, Adefovir and Entecavir. In terms of biological role, multifunctional enzyme that converts the viral RNA genome into dsDNA in viral cytoplasmic capsids. This enzyme displays a DNA polymerase activity that can copy either DNA or RNA templates, and a ribonuclease H (RNase H) activity that cleaves the RNA strand of RNA-DNA heteroduplexes in a partially processive 3'- to 5'-endonucleasic mode. Neo-synthesized pregenomic RNA (pgRNA) are encapsidated together with the P protein, and reverse-transcribed inside the nucleocapsid. Initiation of reverse-transcription occurs first by binding the epsilon loop on the pgRNA genome, and is initiated by protein priming, thereby the 5'-end of (-)DNA is covalently linked to P protein. Partial (+)DNA is synthesized from the (-)DNA template and generates the relaxed circular DNA (RC-DNA) genome. After budding and infection, the RC-DNA migrates in the nucleus, and is converted into a plasmid-like covalently closed circular DNA (cccDNA). The activity of P protein does not seem to be necessary for cccDNA generation, and is presumably released from (+)DNA by host nuclear DNA repair machinery. The polypeptide is Protein P (Homo sapiens (Human)).